Reading from the N-terminus, the 618-residue chain is C2H2 finger domain transcription factor sebA (618 aa).

The interval 394 to 488 (GDATQSTEEM…RGRKQSLTDD (95 aa)) is disordered. A compositionally biased stretch (basic residues) spans 406–416 (KKRVTSRRSLK). 2 stretches are compositionally biased toward low complexity: residues 417-432 (KASTSESSSDSLAKKT) and 443-458 (SDTTSTVQQSTASSRQ). Over residues 459–469 (NSTANTSNSES) the composition is skewed to polar residues. 2 C2H2-type zinc fingers span residues 493–516 (FVCSLCSRRFRRQEHLKRHYRSLH) and 522–544 (FECHECGKKFSRSDNLAQHARTH). Low complexity predominate over residues 582–597 (NAATSKSTTSESSDGT). The segment at 582 to 618 (NAATSKSTTSESSDGTISDTSSVGGRPAKKRRRDDHV) is disordered. Over residues 608–618 (PAKKRRRDDHV) the composition is skewed to basic residues.

It is found in the nucleus. The protein resides in the cytoplasm. In terms of biological role, transcription factor that is involved in the response to heat shock, oxidative stress, and poor nutrient conditions. Controls expression of oxidative stress response genes such as ccp1, cat1, cat2, sod2; as well as of heat shock genes such as hsf1, hsp30 and hsp90. Negatively controls the expression of the fumiquinazoline (fmq) cluster via binding to the STRE motifs at the fmqA-D promoters. Plays a role in virulence. This Aspergillus fumigatus (strain ATCC MYA-4609 / CBS 101355 / FGSC A1100 / Af293) (Neosartorya fumigata) protein is C2H2 finger domain transcription factor sebA.